Reading from the N-terminus, the 605-residue chain is Elongation factor 4 (605 aa).

The region spanning 9–192 is the tr-type G domain; it reads NRIRNFCIIA…AIVQRIPAPA (184 aa). Residues 21 to 26 and 139 to 142 contribute to the GTP site; these read DHGKST and NKID.

It belongs to the TRAFAC class translation factor GTPase superfamily. Classic translation factor GTPase family. LepA subfamily.

It localises to the cell inner membrane. It catalyses the reaction GTP + H2O = GDP + phosphate + H(+). Functionally, required for accurate and efficient protein synthesis under certain stress conditions. May act as a fidelity factor of the translation reaction, by catalyzing a one-codon backward translocation of tRNAs on improperly translocated ribosomes. Back-translocation proceeds from a post-translocation (POST) complex to a pre-translocation (PRE) complex, thus giving elongation factor G a second chance to translocate the tRNAs correctly. Binds to ribosomes in a GTP-dependent manner. The protein is Elongation factor 4 of Pelodictyon phaeoclathratiforme (strain DSM 5477 / BU-1).